The primary structure comprises 167 residues: Zymogen granule membrane protein 16 (167 aa).

The signal sequence occupies residues 1–16 (MLAIALLVLLCASASA). In terms of domain architecture, Jacalin-type lectin spans 24–159 (SSYSGEYGGK…IDAISLHWDT (136 aa)).

Belongs to the jacalin lectin family. Expressed in pancreas, colon, duodenum, and much less in stomach.

The protein localises to the secreted. Its subcellular location is the extracellular space. It is found in the extracellular matrix. The protein resides in the zymogen granule lumen. It localises to the golgi apparatus lumen. Its function is as follows. May play a role in protein trafficking. May act as a linker molecule between the submembranous matrix on the luminal side of zymogen granule membrane (ZGM) and aggregated secretory proteins during granule formation in the TGN. This Rattus norvegicus (Rat) protein is Zymogen granule membrane protein 16 (Zg16).